Reading from the N-terminus, the 161-residue chain is Beta-lactoglobulin-2 (161 aa).

2 cysteine pairs are disulfide-bonded: cysteine 66-cysteine 159 and cysteine 106-cysteine 119.

Belongs to the calycin superfamily. Lipocalin family. As to quaternary structure, monomer. As to expression, synthesized in mammary gland and secreted in milk.

It localises to the secreted. In terms of biological role, primary component of whey, it binds retinol and is probably involved in the transport of that molecule. The polypeptide is Beta-lactoglobulin-2 (LGB2) (Canis lupus familiaris (Dog)).